We begin with the raw amino-acid sequence, 1588 residues long: Ubiquitin carboxyl-terminal hydrolase 54 (1588 aa).

An Omega-N-methylarginine modification is found at Arg12. One can recognise a USP domain in the interval 31-352 (KGLSNEPGQN…QPLLLLYADP (322 aa)). The active-site Nucleophile is the Cys42. Zn(2+) contacts are provided by His67, Cys69, Cys74, Cys77, His133, Cys145, Cys150, His153, Cys166, Cys169, Cys225, and Cys229. Residue His302 is the Proton acceptor of the active site. Composition is skewed to basic and acidic residues over residues 382-391 (GHLTDSECNQ) and 424-434 (SEGETLKEKQA). 3 disordered regions span residues 382–519 (GHLT…PTWR), 555–577 (FTPD…RSQH), and 601–624 (ESGY…PPDS). A Phosphoserine modification is found at Ser424. Positions 453-471 (TVSNMIHSRPSLASQTSAG) are enriched in polar residues. Positions 499-513 (TESTSSEAKSSSSSK) are enriched in low complexity. The segment covering 555–572 (FTPDEVSKPTANDIKDGG) has biased composition (basic and acidic residues). Positions 601 to 616 (ESGYESSERNSSSPVS) are enriched in low complexity. Ser613 and Ser616 each carry phosphoserine. Residues 682 to 712 (ELDELQEEVVRRAQEQELRKKREKELEAAKG) are a coiled coil. 4 disordered regions span residues 801-834 (RSLQ…PQPT), 1089-1182 (QNTS…PDMY), 1221-1242 (SQVK…SHPR), and 1491-1561 (WGNL…RSPG). Over residues 808–826 (QQQASSQQPVQPSASLPSQ) the composition is skewed to low complexity. A compositionally biased stretch (basic and acidic residues) spans 1126-1147 (GREHCRWVKQPRSPDGRERPPC). Ser1138 is modified (phosphoserine). The segment covering 1510 to 1524 (PSSNLHVPLRSTWNS) has biased composition (polar residues). Residues 1536-1547 (RRIDMPPDDDWR) show a composition bias toward basic and acidic residues.

It belongs to the peptidase C19 family.

The enzyme catalyses Thiol-dependent hydrolysis of ester, thioester, amide, peptide and isopeptide bonds formed by the C-terminal Gly of ubiquitin (a 76-residue protein attached to proteins as an intracellular targeting signal).. Its function is as follows. Deubiquitinase that specifically mediates 'Lys-63'-linked deubiquitination of substrates with a polyubiquitin chain composed of at least 3 ubiquitins. Specifically recognizes ubiquitin chain in position S2 and catalyzes cleavage of polyubiquitin within 'Lys-63'-linked chains. Not able to deubiquitinate substrates with shorter ubiquitin chains. Mediates deubiquitination of PLK4, maintaining PLK4 stability by reducing its ubiquitination-mediated degradation. In Mus musculus (Mouse), this protein is Ubiquitin carboxyl-terminal hydrolase 54 (Usp54).